The chain runs to 231 residues: MRTGLIARKLGMTRLFKEDGTHVPVTVLHLDQVQVVDTRTKERDGYTAVQLGFGQAKPKHVSKANKGHFARVKVEPKKKLVEFRVAEDAILEPGATLSAEHFLVGQKVDVTGTSKGKGFAGAMKRWNFAGLEASHGVSISHRSHGSTGNRQDPGKTFKNKKMAGHLGDERVTTQNVEVAHVDAARGLLMIRGSIPGAKGGYVLVRDAVKRKRPEGVAYPAALQADAAASEG.

Q151 carries the N5-methylglutamine modification.

It belongs to the universal ribosomal protein uL3 family. Part of the 50S ribosomal subunit. Forms a cluster with proteins L14 and L19. Methylated by PrmB.

Its function is as follows. One of the primary rRNA binding proteins, it binds directly near the 3'-end of the 23S rRNA, where it nucleates assembly of the 50S subunit. The sequence is that of Large ribosomal subunit protein uL3 from Granulibacter bethesdensis (strain ATCC BAA-1260 / CGDNIH1).